The primary structure comprises 358 residues: Probable RNA methyltransferase MXAN_6459 (358 aa).

Glu-92 serves as the catalytic Proton acceptor. Residues Phe-99 to Lys-327 form the Radical SAM core domain. Cys-106 and Cys-333 are disulfide-bonded. Residues Cys-113, Cys-117, and Cys-120 each coordinate [4Fe-4S] cluster. S-adenosyl-L-methionine is bound by residues Gly-160 to Glu-161, Ser-192, Ser-215 to Thr-217, and Asp-289. Cys-333 serves as the catalytic S-methylcysteine intermediate.

The protein belongs to the radical SAM superfamily. RlmN family. Requires [4Fe-4S] cluster as cofactor.

The protein localises to the cytoplasm. The chain is Probable RNA methyltransferase MXAN_6459 from Myxococcus xanthus (strain DK1622).